The sequence spans 521 residues: BAR/IMD domain-containing adapter protein 2 (521 aa).

One can recognise an IMD domain in the interval 1 to 250 (MSLSRSEEMH…VQLMQQMGNS (250 aa)). The stretch at 132-153 (DALDKCQAELKKLRKKSQGSKN) forms a coiled coil. Phosphoserine occurs at positions 262, 324, 326, and 337. Residues 297 to 370 (APVMNGVSGP…TLPRSSSMAA (74 aa)) form a disordered region. Residues 321-333 (QPKSTSPPQSQSK) are compositionally biased toward low complexity. Thr341 is subject to Phosphothreonine. Ser347 carries the post-translational modification Phosphoserine. Residues 353-368 (SYATTENKTLPRSSSM) show a composition bias toward polar residues. Residue Thr361 is modified to Phosphothreonine. Phosphoserine occurs at positions 367, 385, 396, and 455. The 64-residue stretch at 375–438 (NGRMRVKAIF…PFSYTRVLDN (64 aa)) folds into the SH3 domain. Residues 450–471 (QGKSSSTGNLLDKEDLALPPPD) are disordered.

Homodimer. Interacts with CDC42 and RAC1 that have been activated by GTP binding. Interacts with ATN1, ADGRB1, DIAPH1, EPS8, SHANK1, SHANK2, SHANK3, TIAM1, WASF1 and WASF2. Interacts with ENAH after recruitment of CDC42. In terms of processing, phosphorylated on tyrosine residues by INSR in response to insulin treatment.

It is found in the cytoplasm. The protein resides in the membrane. It localises to the cell projection. Its subcellular location is the filopodium. The protein localises to the ruffle. It is found in the cytoskeleton. Its function is as follows. Adapter protein that links membrane-bound small G-proteins to cytoplasmic effector proteins. Necessary for CDC42-mediated reorganization of the actin cytoskeleton and for RAC1-mediated membrane ruffling. Involved in the regulation of the actin cytoskeleton by WASF family members and the Arp2/3 complex. Plays a role in neurite growth. Acts syngeristically with ENAH to promote filipodia formation. Plays a role in the reorganization of the actin cytoskeleton in response to bacterial infection. Participates in actin bundling when associated with EPS8, promoting filopodial protrusions. The sequence is that of BAR/IMD domain-containing adapter protein 2 (BAIAP2) from Bos taurus (Bovine).